A 381-amino-acid chain; its full sequence is E3 ubiquitin-protein ligase RNF34 (381 aa).

The FYVE-type zinc finger occupies 56 to 107 (EGPNIVCKACGLSFSVFRKKHVCCDCKKDFCSLCSVSQENLRRCSTCHLLQE). In terms of domain architecture, SAP 1 spans 115-134 (LMRLKVKDLRQYLLLRNVPT). At S169 the chain carries Phosphoserine. A disordered region spans residues 216 to 261 (LASANTDDEDGEEDDDDDDDDDDEDDDEQEENLEEQNPGLSKKKAR). Positions 221–249 (TDDEDGEEDDDDDDDDDDEDDDEQEENLE) are enriched in acidic residues. Phosphoserine occurs at positions 263 and 265. Residues 273-287 (VEGMSVRQLKEILAR) form the SAP 2 domain. The RING-type zinc-finger motif lies at 334–369 (CRICMDAVIDCVLLECGHMVTCTKCGKRMSECPICR).

In terms of assembly, interacts with CASP8 and CASP10. Interacts with p53/TP53; involved in p53/TP53 ubiquitination. Interacts (via RING-type zinc finger) with MDM2; the interaction stabilizes MDM2. Interacts (via RING-type zinc finger) with PPARGC1A. Interacts with NOD1. Post-translationally, proteolytically cleaved by caspases upon induction of apoptosis by TNF. In terms of processing, autoubiquitinated (in vitro). Ubiquitous. Detected in brain, cerebellum, midbrain, hippocampus, striatum, heart, lung, kidney, muscle, spleen and testis.

The protein resides in the cell membrane. The protein localises to the endomembrane system. It localises to the nucleus. Its subcellular location is the nucleus speckle. It is found in the cytoplasm. The protein resides in the cytosol. The enzyme catalyses S-ubiquitinyl-[E2 ubiquitin-conjugating enzyme]-L-cysteine + [acceptor protein]-L-lysine = [E2 ubiquitin-conjugating enzyme]-L-cysteine + N(6)-ubiquitinyl-[acceptor protein]-L-lysine.. Its pathway is protein modification; protein ubiquitination. Its function is as follows. E3 ubiquitin-protein ligase that regulates several biological processes through the ubiquitin-mediated proteasomal degradation of various target proteins. Ubiquitinates the caspases CASP8 and CASP10, promoting their proteasomal degradation, to negatively regulate cell death downstream of death domain receptors in the extrinsic pathway of apoptosis. May mediate 'Lys-48'-linked polyubiquitination of RIPK1 and its subsequent proteasomal degradation thereby indirectly regulating the tumor necrosis factor-mediated signaling pathway. Negatively regulates p53/TP53 through its direct ubiquitination and targeting to proteasomal degradation. Indirectly, may also negatively regulate p53/TP53 through ubiquitination and degradation of SFN. Mediates PPARGC1A proteasomal degradation probably through ubiquitination thereby indirectly regulating the metabolism of brown fat cells. Possibly involved in innate immunity, through 'Lys-48'-linked polyubiquitination of NOD1 and its subsequent proteasomal degradation. In Rattus norvegicus (Rat), this protein is E3 ubiquitin-protein ligase RNF34.